The sequence spans 329 residues: Beta-ketoacyl-[acyl-carrier-protein] synthase III (329 aa).

Active-site residues include cysteine 123 and histidine 256. The interval 257–261 is ACP-binding; that stretch reads QANIR. Residue asparagine 286 is part of the active site.

It belongs to the thiolase-like superfamily. FabH family. Homodimer.

Its subcellular location is the cytoplasm. The catalysed reaction is malonyl-[ACP] + acetyl-CoA + H(+) = 3-oxobutanoyl-[ACP] + CO2 + CoA. The protein operates within lipid metabolism; fatty acid biosynthesis. In terms of biological role, catalyzes the condensation reaction of fatty acid synthesis by the addition to an acyl acceptor of two carbons from malonyl-ACP. Catalyzes the first condensation reaction which initiates fatty acid synthesis and may therefore play a role in governing the total rate of fatty acid production. Possesses both acetoacetyl-ACP synthase and acetyl transacylase activities. Its substrate specificity determines the biosynthesis of branched-chain and/or straight-chain of fatty acids. This is Beta-ketoacyl-[acyl-carrier-protein] synthase III from Burkholderia lata (strain ATCC 17760 / DSM 23089 / LMG 22485 / NCIMB 9086 / R18194 / 383).